The chain runs to 904 residues: Nitrate reductase [NADH] 1 (904 aa).

Polar residues-rich tracts occupy residues 1–10 (MAASVENRQF) and 39–50 (STNFQKKPNSTI). A disordered region spans residues 1–65 (MAASVENRQF…SSEDDDDDDE (65 aa)). Residues 56–65 (SSEDDDDDDE) are compositionally biased toward acidic residues. Cys183 contacts Mo-molybdopterin. Residues 531–606 (SKMYSMSEVR…LEEFRIGELL (76 aa)) form the Cytochrome b5 heme-binding domain. The heme site is built by His566 and His589. An FAD-binding FR-type domain is found at 647–759 (REKIPCKLID…KGPLGHIEYQ (113 aa)). Residues 699 to 702 (RAYT), 716 to 720 (VVKIY), Phe721, Phe728, 733 to 735 (QMS), and Thr786 contribute to the FAD site.

Belongs to the nitrate reductase family. In terms of assembly, homodimer. FAD is required as a cofactor. It depends on heme as a cofactor. Mo-molybdopterin serves as cofactor.

It catalyses the reaction nitrite + NAD(+) + H2O = nitrate + NADH + H(+). Regulated by the nitrogen source and controlled by the circadian rhythm. In terms of biological role, nitrate reductase is a key enzyme involved in the first step of nitrate assimilation in plants, fungi and bacteria. The protein is Nitrate reductase [NADH] 1 (NIA1) of Nicotiana tabacum (Common tobacco).